Consider the following 363-residue polypeptide: Probable dual-specificity RNA methyltransferase RlmN (363 aa).

Glutamate 99 acts as the Proton acceptor in catalysis. The region spanning serine 105–serine 341 is the Radical SAM core domain. An intrachain disulfide couples cysteine 112 to cysteine 346. Residues cysteine 119, cysteine 123, and cysteine 126 each coordinate [4Fe-4S] cluster. S-adenosyl-L-methionine is bound by residues glycine 171–glutamate 172, serine 204, serine 227–histidine 229, and asparagine 303. Catalysis depends on cysteine 346, which acts as the S-methylcysteine intermediate.

The protein belongs to the radical SAM superfamily. RlmN family. It depends on [4Fe-4S] cluster as a cofactor.

It localises to the cytoplasm. It catalyses the reaction adenosine(2503) in 23S rRNA + 2 reduced [2Fe-2S]-[ferredoxin] + 2 S-adenosyl-L-methionine = 2-methyladenosine(2503) in 23S rRNA + 5'-deoxyadenosine + L-methionine + 2 oxidized [2Fe-2S]-[ferredoxin] + S-adenosyl-L-homocysteine. The catalysed reaction is adenosine(37) in tRNA + 2 reduced [2Fe-2S]-[ferredoxin] + 2 S-adenosyl-L-methionine = 2-methyladenosine(37) in tRNA + 5'-deoxyadenosine + L-methionine + 2 oxidized [2Fe-2S]-[ferredoxin] + S-adenosyl-L-homocysteine. In terms of biological role, specifically methylates position 2 of adenine 2503 in 23S rRNA and position 2 of adenine 37 in tRNAs. The chain is Probable dual-specificity RNA methyltransferase RlmN from Chlorobium phaeobacteroides (strain DSM 266 / SMG 266 / 2430).